Consider the following 134-residue polypeptide: MTEQIESMELAAVAHIKATKNDTFVHITDMTGSETIAKITGGMRVKAQRDEGSPYAAMLAAQDVATKILGRGVKVLHFKLRGAGGVKPMALGPGAQTAIRTLIRAGLRVGRIEDVTPVARDRVRKRGGHRGRRV.

Belongs to the universal ribosomal protein uS11 family. As to quaternary structure, component of the small ribosomal subunit.

Its subcellular location is the cytoplasm. This is Small ribosomal subunit protein uS11 (RPS14) from Encephalitozoon cuniculi (strain GB-M1) (Microsporidian parasite).